The primary structure comprises 157 residues: Endoribonuclease YbeY (157 aa).

3 residues coordinate Zn(2+): H123, H127, and H133.

This sequence belongs to the endoribonuclease YbeY family. Zn(2+) is required as a cofactor.

It is found in the cytoplasm. In terms of biological role, single strand-specific metallo-endoribonuclease involved in late-stage 70S ribosome quality control and in maturation of the 3' terminus of the 16S rRNA. The polypeptide is Endoribonuclease YbeY (Desulfitobacterium hafniense (strain Y51)).